Consider the following 265-residue polypeptide: Mlc titration factor A (265 aa).

Positions 111, 148, 152, and 211 each coordinate Zn(2+).

The protein belongs to the MtfA family. Interacts with Mlc. It depends on Zn(2+) as a cofactor.

The protein resides in the cytoplasm. In terms of biological role, involved in the modulation of the activity of the glucose-phosphotransferase system (glucose-PTS). Interacts with the transcriptional repressor Mlc, preventing its interaction with DNA and leading to the modulation of expression of genes regulated by Mlc, including ptsG, which encodes the PTS system glucose-specific EIICB component. Its function is as follows. Shows zinc-dependent metallopeptidase activity. The sequence is that of Mlc titration factor A from Escherichia coli O139:H28 (strain E24377A / ETEC).